Reading from the N-terminus, the 186-residue chain is MGLLDRLSGLLGLKKKEVHVLCLGLDNSGKTTIINKLKPSNAQSQDIVPTIGFSIQKFKSSSLSFTVFDMSGQGRYRNLWEHYYKEGQAIIFVIDSSDKLRMVVAKEELRTLLNHPDIKHRRIPILFFANKMDLRDALTSVKVSQLLCLEDIKDKPWHICASDAIKGEGLQEGVDWLQDQIQSVKT.

A lipid anchor (N-myristoyl glycine) is attached at G2. GTP contacts are provided by residues 24-31 (GLDNSGKT), 69-73 (DMSGQ), and 130-133 (NKMD).

Belongs to the small GTPase superfamily. Arf family. In terms of assembly, interacts with SEC61B, ARL6IP1, ARL6IP2, ARL6IP3, ARL6IP4 ARL6IP5 and ARL6IP6. Interacts (GTP-bound form) with the BBSome a complex that contains BBS1, BBS2, BBS4, BBS5, BBS7, BBS8/TTC8, BBS9 and BBIP10. Interacts (GTP-free form) with IFT27.

Its subcellular location is the cell projection. It is found in the cilium membrane. It localises to the cytoplasm. The protein localises to the cytoskeleton. The protein resides in the cilium axoneme. Its subcellular location is the cilium basal body. In terms of biological role, involved in membrane protein trafficking at the base of the ciliary organelle. Mediates recruitment onto plasma membrane of the BBSome complex which would constitute a coat complex required for sorting of specific membrane proteins to the primary cilia. Together with the BBSome complex and LTZL1, controls SMO ciliary trafficking and contributes to the sonic hedgehog (SHH) pathway regulation. May regulate cilia assembly and disassembly and subsequent ciliary signaling events such as the Wnt signaling cascade. Isoform 2 may be required for proper retinal function and organization. This Bos taurus (Bovine) protein is ADP-ribosylation factor-like protein 6 (ARL6).